A 200-amino-acid polypeptide reads, in one-letter code: Recombination protein RecR (200 aa).

The segment at 59-74 (CEKCNTFTEAQVCEVC) adopts a C4-type zinc-finger fold. The region spanning 82 to 177 (ALLCVVETPA…AVTRLARGVP (96 aa)) is the Toprim domain.

This sequence belongs to the RecR family.

May play a role in DNA repair. It seems to be involved in an RecBC-independent recombinational process of DNA repair. It may act with RecF and RecO. The protein is Recombination protein RecR of Burkholderia pseudomallei (strain 1106a).